The primary structure comprises 265 residues: Lipopolysaccharide core heptose(I) kinase WaaP (265 aa).

Asp162 is a catalytic residue.

The protein belongs to the protein kinase superfamily. KdkA/RfaP family. Requires Mg(2+) as cofactor.

It is found in the cell inner membrane. It catalyses the reaction an L-alpha-D-Hep-(1-&gt;3)-L-alpha-D-Hep-(1-&gt;5)-[alpha-Kdo-(2-&gt;4)]-alpha-Kdo-(2-&gt;6)-lipid A + ATP = an L-alpha-D-Hep-(1-&gt;3)-4-O-phospho-L-alpha-D-Hep-(1-&gt;5)-[alpha-Kdo-(2-&gt;4)]-alpha-Kdo-(2-&gt;6)-lipid A + ADP + H(+). The catalysed reaction is L-alpha-D-Hep-(1-&gt;3)-L-alpha-D-Hep-(1-&gt;5)-[alpha-Kdo-(2-&gt;4)]-alpha-Kdo-(2-&gt;6)-lipid A (E. coli) + ATP = L-alpha-D-Hep-(1-&gt;3)-4-O-phospho-L-alpha-D-Hep-(1-&gt;5)-[alpha-Kdo-(2-&gt;4)]-alpha-Kdo-(2-&gt;6)-lipid A (E. coli) + ADP + H(+). It participates in bacterial outer membrane biogenesis; LPS core biosynthesis. In terms of biological role, kinase involved in the biosynthesis of the core oligosaccharide region of lipopolysaccharide (LPS). Catalyzes the phosphorylation of heptose I (HepI), the first heptose added to the Kdo2-lipid A module. This Escherichia coli protein is Lipopolysaccharide core heptose(I) kinase WaaP.